The sequence spans 591 residues: Acetyltransferase spyB (591 aa).

N-linked (GlcNAc...) asparagine glycosylation occurs at asparagine 114. 9 consecutive transmembrane segments (helical) span residues 123–143 (GTII…LIFL), 168–188 (TLLY…ILIL), 199–219 (LWIF…ISHG), 228–248 (VGVQ…INPL), 309–329 (SAFL…LNCA), 383–403 (ASIL…PLFG), 453–473 (IFFV…LMGI), 481–501 (ILFF…QAAW), and 529–549 (LVGF…WLCP).

This sequence belongs to the wax synthase family.

It is found in the membrane. It catalyses the reaction sartorypyrone F + acetyl-CoA = sartorypyrone G + CoA. It carries out the reaction sartorypyrone D + acetyl-CoA = sartorypyrone A + CoA. It participates in secondary metabolite biosynthesis; terpenoid biosynthesis. In terms of biological role, acetyltransferase; part of the gene cluster that mediates the biosynthesis of meroterpenoids called sartorypyrones. SpyB catalyzes the last step of the pathway and is responsible for the acetylation of sartorypyrones D and F to produce sartorypyrones A and G, respectively. The biosynthesis of sartorypyrones begins with the production of triacetic acid lactone (TAL) by the NR-PKS spyA using one molecule of acetyl-CoA and two molecules of malonyl-CoA. The prenyltransferase spyF then conjugates geranylgeranyl pyrophosphate (GGPP) to TAL to form geranylgeranyl-triacetate lactone, for which the pathway-specific geranylgeranyl pyrophosphate synthase (GGPS) spyE is required to provide GGPP. Subsequently, geranylgeranyl-triacetate lactone is epoxidized at the terminal olein by the FAD-dependent monooxygenase spyC, followed by cyclization of the terpenoid component catalyzed by the terpene cyclase spyD to produce both the bicyclic sartorypyrone F and the monocyclic sartorypyrone D. Finally, the last step of the biosynthesis involves the acetylation of the meroterpenoids sartorypyrones D and F by the acetyltransferase SpyB to produce sartorypyrones A and G, respectively. The sequence is that of Acetyltransferase spyB from Aspergillus fumigatus (strain ATCC MYA-4609 / CBS 101355 / FGSC A1100 / Af293) (Neosartorya fumigata).